The chain runs to 238 residues: MKKAKILSGVLLLCFSSPLISQAATLDVRGGYRSGSHAYETRLKVSEGWQNGWWASMESNTWNTIHDNKKENAALNDVQVEVNYAIKLDDQWTVRPGMLTHFSSNGTRYGPYVKLSWDATKDLNFGIRYRYDWKAYRQQDLSGDMSRDNVHRWDGYVTYHINSDFTFAWQTTLYSKQNDYRYANHKKWATENAFVLQYHMTPDITPYIEYDYLDRQGVYNGRDNLSENSYRIGVSFKL.

A signal peptide spans 1–23 (MKKAKILSGVLLLCFSSPLISQA). The Periplasmic portion of the chain corresponds to 24–25 (AT). At 26-32 (LDVRGGY) the chain is embedded in the membrane. The Extracellular portion of the chain corresponds to 33–39 (RSGSHAY). The segment at 40-49 (ETRLKVSEGW) is a transmembrane helix. Residues 50 to 52 (QNG) lie on the Periplasmic side of the membrane. A transmembrane span lies at residues 53-61 (WWASMESNT). The Extracellular portion of the chain corresponds to 62 to 76 (WNTIHDNKKENAALN). A membrane pass occupies residues 77–86 (DVQVEVNYAI). Topologically, residues 87-91 (KLDDQ) are periplasmic. Positions 92-102 (WTVRPGMLTHF) form a transmembrane segment. The Extracellular portion of the chain corresponds to 103 to 107 (SSNGT). Residues 108–117 (RYGPYVKLSW) are membrane-embedded. At 118–122 (DATKD) the chain is on the periplasmic side. A transmembrane span lies at residues 123-132 (LNFGIRYRYD). Residues 133-151 (WKAYRQQDLSGDMSRDNVH) are Extracellular-facing. A transmembrane span lies at residues 152 to 159 (RWDGYVTY). Over 160–164 (HINSD) the chain is Periplasmic. A transmembrane helix spans residues 165–173 (FTFAWQTTL). The Extracellular segment spans residues 174–190 (YSKQNDYRYANHKKWAT). A transmembrane helix spans residues 191-200 (ENAFVLQYHM). At 201–203 (TPD) the chain is on the periplasmic side. A membrane pass occupies residues 204 to 212 (ITPYIEYDY). The Extracellular segment spans residues 213 to 228 (LDRQGVYNGRDNLSEN). A membrane pass occupies residues 229-236 (SYRIGVSF). Residues 237–238 (KL) lie on the Periplasmic side of the membrane.

Belongs to the oligogalacturonate-specific porin KdgM (TC 1.B.35) family. NanC subfamily. In terms of assembly, monomer.

It is found in the cell outer membrane. The enzyme catalyses N-acetylneuraminate(in) = N-acetylneuraminate(out). Its function is as follows. Outer membrane channel protein allowing the entry of N-acetylneuraminic acid (Neu5Ac, the most abundant sialic acid on host cell surfaces) into the bacteria. NanC proteins form high-conductance channels which are open at low membrane potentials and which have a weak anion selectivity. The chain is N-acetylneuraminic acid outer membrane channel protein NanC (nanC) from Escherichia coli O157:H7.